The following is a 94-amino-acid chain: Co-chaperonin GroES (94 aa).

Belongs to the GroES chaperonin family. As to quaternary structure, heptamer of 7 subunits arranged in a ring. Interacts with the chaperonin GroEL.

Its subcellular location is the cytoplasm. Together with the chaperonin GroEL, plays an essential role in assisting protein folding. The GroEL-GroES system forms a nano-cage that allows encapsulation of the non-native substrate proteins and provides a physical environment optimized to promote and accelerate protein folding. GroES binds to the apical surface of the GroEL ring, thereby capping the opening of the GroEL channel. In Streptococcus pneumoniae (strain ATCC 700669 / Spain 23F-1), this protein is Co-chaperonin GroES.